The sequence spans 729 residues: DNA topoisomerase 3 (729 aa).

One can recognise a Toprim domain in the interval 3-136 (KSVVIAEKPS…IKRLWISSVT (134 aa)). Mg(2+)-binding residues include E9 and D105. The region spanning 153 to 594 (YDNLYASAVA…EMKNYTKEIV (442 aa)) is the Topo IA-type catalytic domain. The tract at residues 187–192 (NCGRVQ) is interaction with DNA. Residue Y310 is the O-(5'-phospho-DNA)-tyrosine intermediate of the active site. A compositionally biased stretch (basic and acidic residues) spans 686-713 (ERRKKESGNKADKRDVQKYMKQQKKEEE). A disordered region spans residues 686–718 (ERRKKESGNKADKRDVQKYMKQQKKEEEPLNNP).

Belongs to the type IA topoisomerase family. It depends on Mg(2+) as a cofactor.

It carries out the reaction ATP-independent breakage of single-stranded DNA, followed by passage and rejoining.. Functionally, releases the supercoiling and torsional tension of DNA, which is introduced during the DNA replication and transcription, by transiently cleaving and rejoining one strand of the DNA duplex. Introduces a single-strand break via transesterification at a target site in duplex DNA. The scissile phosphodiester is attacked by the catalytic tyrosine of the enzyme, resulting in the formation of a DNA-(5'-phosphotyrosyl)-enzyme intermediate and the expulsion of a 3'-OH DNA strand. The free DNA strand then undergoes passage around the unbroken strand, thus removing DNA supercoils. Finally, in the religation step, the DNA 3'-OH attacks the covalent intermediate to expel the active-site tyrosine and restore the DNA phosphodiester backbone. The sequence is that of DNA topoisomerase 3 from Bacillus cereus (strain ATCC 10987 / NRS 248).